Reading from the N-terminus, the 250-residue chain is Homeobox protein DLL-1 (250 aa).

2 disordered regions span residues 40–66 (YPSLHCLHSGSHHHPQHQHDTNYSGSN) and 84–106 (SPYLQSCNSNTTTQSRAEEPDQQ). Residues 84 to 98 (SPYLQSCNSNTTTQS) are compositionally biased toward polar residues. The segment at residues 125–184 (IRKPRTIYSSLQLQALNHRFQQTQYLALPERAELAASLGVTQTQVKIWFQNKRSKYKKLI) is a DNA-binding region (homeobox).

The protein belongs to the distal-less homeobox family.

The protein resides in the nucleus. The protein is Homeobox protein DLL-1 (dll1) of Xenopus laevis (African clawed frog).